The sequence spans 452 residues: MASNFVKLGSQFIGKLTRVTSLPAHHTDLVQRVSILKDELLTIGNSKEKFQNVLDQKGQWLFRTYRDGAGILELMDQLFPRHYLALQVLEWRRGQKDYCIPLTSEEYAKGIKIAGRARDINLAVYLFDEAAKKRMQTASVYNSLMSVYMWNGLAEECQSLFKDFRRQTHCAPTVVTYNILVSVYGRLLMVKNMEAAFEELQKVKLPPNSVTYNFLIAGYMTAWNWDKMEATFQEMKRGPVEPDTDTYQLMLRGYANSGNLNRMEEMYEVIKDQVGVNSGPLVRAMICAYCKKAVEDRVQKIENLLSLLSGEEYLPWLNVLLIRLYAQEDFVEAMESKINEAFEQKTCVNKSSIMRAIIAAYFRCNEVDNLANFVKRAESAGWKLCRSLYHCKIMMYGSQKRFEEMEGVVNEMAETNYGLVTKTFAIMIKAYKNHGMESDAEKVKGKMLKRGL.

7 PPR repeats span residues T137 to A171, T173 to P207, N208 to P242, D243 to Q273, K350 to L384, C385 to L419, and V420 to L452.

This sequence belongs to the PPR family. P subfamily.

This Arabidopsis thaliana (Mouse-ear cress) protein is Pentatricopeptide repeat-containing protein At2g30780.